Reading from the N-terminus, the 1497-residue chain is Dual oxidase 1 (1497 aa).

An N-terminal signal peptide occupies residues 1 to 21 (MRSKHVLYIAILFSSIFGGKG). Residues 22–587 (IQQNEEFQRY…MQSTYWTDND (566 aa)) are Extracellular-facing. Residues 26–590 (EEFQRYDGWY…TYWTDNDTTY (565 aa)) form a peroxidase-like; mediates peroxidase activity region. 4 N-linked (GlcNAc...) asparagine glycosylation sites follow: Asn-66, Asn-305, Asn-567, and Asn-586. Residues 588-608 (TTYVFTLIGLACVPLICYGIG) form a helical membrane-spanning segment. Over 609–986 (RYLVNRRIAI…VSAFLETYRQ (378 aa)) the chain is Cytoplasmic. 2 consecutive EF-hand domains span residues 817–852 (ANNE…FVNA) and 853–888 (PQKQ…LNQT). Residues 987 to 1007 (HVFIVFCFVAINLVLFFERFW) form a helical membrane-spanning segment. At 1008-1024 (HYRYMAENRDLRRVMGA) the chain is on the extracellular side. A helical transmembrane segment spans residues 1025 to 1045 (GIAITRGAAGALSFCMALILL). Residues 1030–1210 (RGAAGALSFC…FVIDRIIGLM (181 aa)) form the Ferric oxidoreductase domain. The Cytoplasmic segment spans residues 1046–1068 (TVCRNIITLLRETVIAQYIPFDS). A helical membrane pass occupies residues 1069-1089 (AIAFHKIVALFAAFWATLHTV). Over 1090-1134 (GHCVNFYHVGTQSQEGLACLFQEAFFGSNFLPSISYWFFSTITGL) the chain is Extracellular. A helical transmembrane segment spans residues 1135 to 1155 (TGIALVAVMCIIYVFALPCFI). The Cytoplasmic segment spans residues 1156–1163 (KRAYHAFR). Residues 1164–1184 (LTHLLNIAFYALTLLHGLPKL) form a helical membrane-spanning segment. At 1185–1189 (LDSPK) the chain is on the extracellular side. A helical transmembrane segment spans residues 1190–1210 (FGYYVVGPIVLFVIDRIIGLM). The FAD-binding FR-type domain maps to 1211–1318 (QYYKKLEIVN…KGPYGDGNQE (108 aa)). Residues 1211 to 1497 (QYYKKLEIVN…PSFAHRFETF (287 aa)) are Cytoplasmic-facing.

It in the N-terminal section; belongs to the peroxidase family. As to quaternary structure, interacts with doxa-1 and tsp-15. Interacts with rho-1. Expressed in hypodermal cells.

The protein resides in the membrane. The catalysed reaction is NADH + O2 + H(+) = H2O2 + NAD(+). The enzyme catalyses NADPH + O2 + H(+) = H2O2 + NADP(+). Its activity is regulated as follows. Peroxidase activity is inhibited by aminobenzohydrazide. Functionally, plays a role in cuticle biogenesis. In complex with doxa-1 and tsp-15, produces reactive oxygen species (ROS), which are probably used by mlt-7 for tyrosine cross-linking, thus stabilizing cuticular extracellular matrix. May regulate the production of ROS by playing a role in modulating proline catabolism. Required in combination with mlt-7 for correct formation of cross-links in cuticle collagens. Association with the GTPase rho-1 promotes ROS production and this interaction may be modulated by memo-1, in order to control the oxidative stress response and longevity. The chain is Dual oxidase 1 from Caenorhabditis elegans.